The chain runs to 305 residues: MSSTQFNKGPSYGLSAEVKNRLLSKYDPQKEAELRSWIEGLTGLSIGPDFQKGLKDGVILCTLMNKLQPGSVPKINRSMQNWHQLENLSNFIKAMVSYGMNPVDLFEANDLFESGNMTQVQVSLLALAGKAKTKGLQSGVDIGVKYSEKQERNFDDATMKAGQCVIGLQMGTNKCASQSGMTAYGTRRHLYDPKNHILPPMDHCTISLQMGTNKCASQVGMTAPGTRRHIYDTKLGTDKCDNSSMSLQMGYTQGANQSGQVFGLGRQIYDPKYCPQGSAADGAPAGDGQGEAPEYLAYCQEEAGY.

S2 is subject to N-acetylserine. 2 positions are modified to N6-acetyllysine: K8 and K25. The region spanning 28–132 is the Calponin-homology (CH) domain; that stretch reads PQKEAELRSW…SLLALAGKAK (105 aa). S138 carries the post-translational modification Phosphoserine. 3 Calponin-like repeats span residues 166–191, 206–231, and 245–269; these read IGLQMGTNKCASQSGMTAYGTRRHLY, ISLQMGTNKCASQVGMTAPGTRRHIY, and MSLQMGYTQGANQSGQVFGLGRQIY.

This sequence belongs to the calponin family. In terms of tissue distribution, smooth muscle, and tissues containing significant amounts of smooth muscle.

Functionally, thin filament-associated protein that is implicated in the regulation and modulation of smooth muscle contraction. It is capable of binding to actin, calmodulin and tropomyosin. The interaction of calponin with actin inhibits the actomyosin Mg-ATPase activity. This Mus musculus (Mouse) protein is Calponin-2 (Cnn2).